The primary structure comprises 251 residues: Probable transcriptional regulatory protein MRA_2631 (251 aa).

The protein belongs to the TACO1 family.

The protein resides in the cytoplasm. The chain is Probable transcriptional regulatory protein MRA_2631 from Mycobacterium tuberculosis (strain ATCC 25177 / H37Ra).